The following is a 338-amino-acid chain: Phosphatidate cytidylyltransferase, mitochondrial (338 aa).

This sequence belongs to the TAM41 family. Mg(2+) is required as a cofactor.

It localises to the mitochondrion inner membrane. It catalyses the reaction a 1,2-diacyl-sn-glycero-3-phosphate + CTP + H(+) = a CDP-1,2-diacyl-sn-glycerol + diphosphate. It participates in phospholipid metabolism; CDP-diacylglycerol biosynthesis; CDP-diacylglycerol from sn-glycerol 3-phosphate: step 3/3. Its function is as follows. Catalyzes the conversion of phosphatidic acid (PA) to CDP-diacylglycerol (CDP-DAG), an essential intermediate in the synthesis of phosphatidylglycerol, cardiolipin and phosphatidylinositol. This is Phosphatidate cytidylyltransferase, mitochondrial (tamm41) from Danio rerio (Zebrafish).